A 310-amino-acid chain; its full sequence is GPN-loop GTPase 2 (310 aa).

The residue at position 2 (A2) is an N-acetylalanine. A GTP-binding site is contributed by 19–24 (GSGKTT). A Gly-Pro-Asn (GPN)-loop; involved in dimer interface motif is present at residues 76 to 78 (GPN). 178-181 (SKMD) lines the GTP pocket.

Belongs to the GPN-loop GTPase family. Heterodimers with GPN1 or GPN3. Binds to RNA polymerase II (RNAPII).

In terms of biological role, small GTPase required for proper localization of RNA polymerase II and III (RNAPII and RNAPIII). May act at an RNAP assembly step prior to nuclear import. In Mus musculus (Mouse), this protein is GPN-loop GTPase 2.